The sequence spans 103 residues: MYAVIATGGKQYKVQEGDAIYVEKIAAEVDSTIELNEVLAVSKEDGLVLGKPVVEGAKVVAKVEAQGKSKKIIVFKYKRKKDYRRKRGHRQAYTKLVIEKIQA.

It belongs to the bacterial ribosomal protein bL21 family. Part of the 50S ribosomal subunit. Contacts protein L20.

Functionally, this protein binds to 23S rRNA in the presence of protein L20. This Clostridium acetobutylicum (strain ATCC 824 / DSM 792 / JCM 1419 / IAM 19013 / LMG 5710 / NBRC 13948 / NRRL B-527 / VKM B-1787 / 2291 / W) protein is Large ribosomal subunit protein bL21.